The primary structure comprises 452 residues: cAMP/cGMP-dependent 3',5'-cAMP/cGMP phosphodiesterase A (452 aa).

The first 23 residues, M1–S23, serve as a signal peptide directing secretion. Residues H24–K49 constitute a propeptide that is removed on maturation. N101, N141, and N277 each carry an N-linked (GlcNAc...) asparagine glycan.

It belongs to the cyclic nucleotide phosphodiesterase class-II family.

It localises to the secreted. The protein localises to the extracellular space. The protein resides in the cell surface. It catalyses the reaction 3',5'-cyclic AMP + H2O = AMP + H(+). The enzyme catalyses 3',5'-cyclic GMP + H2O = GMP + H(+). Inhibited by dithiotreitol (DTT). Functionally, phosphodiesterase which displays a preference for cAMP over cGMP. Involved in the degradation of extracellular cAMP. Maintains the responsiveness of cells to the chemoattractant cAMP during the aggregation phase of development. This is cAMP/cGMP-dependent 3',5'-cAMP/cGMP phosphodiesterase A (pdsA) from Dictyostelium discoideum (Social amoeba).